The sequence spans 957 residues: Glycine dehydrogenase (decarboxylating) (957 aa).

At K708 the chain carries N6-(pyridoxal phosphate)lysine.

The protein belongs to the GcvP family. As to quaternary structure, the glycine cleavage system is composed of four proteins: P, T, L and H. The cofactor is pyridoxal 5'-phosphate.

The catalysed reaction is N(6)-[(R)-lipoyl]-L-lysyl-[glycine-cleavage complex H protein] + glycine + H(+) = N(6)-[(R)-S(8)-aminomethyldihydrolipoyl]-L-lysyl-[glycine-cleavage complex H protein] + CO2. The glycine cleavage system catalyzes the degradation of glycine. The P protein binds the alpha-amino group of glycine through its pyridoxal phosphate cofactor; CO(2) is released and the remaining methylamine moiety is then transferred to the lipoamide cofactor of the H protein. This is Glycine dehydrogenase (decarboxylating) from Escherichia coli (strain UTI89 / UPEC).